A 236-amino-acid chain; its full sequence is CBS domain-containing protein CBSX1, chloroplastic (236 aa).

The N-terminal 53 residues, 1–53 (MDAVLYSVPLSFTPLRASSSPSSPYLLLPRFLSVQPCHKFTFSRSFPSKSRIP), are a transit peptide targeting the chloroplast. The disordered stretch occupies residues 47–66 (PSKSRIPSASSAAGSTLMTN). Residue serine 54 is modified to N-acetylserine. 2 consecutive CBS domains span residues 81–142 (MTKK…GRTE) and 175–231 (MTPA…IKRS).

The protein resides in the plastid. The protein localises to the chloroplast. This chain is CBS domain-containing protein CBSX1, chloroplastic (CBSX1), found in Arabidopsis thaliana (Mouse-ear cress).